The following is a 371-amino-acid chain: 4-hydroxy-3-methylbut-2-en-1-yl diphosphate synthase (flavodoxin) (371 aa).

[4Fe-4S] cluster-binding residues include cysteine 271, cysteine 274, cysteine 306, and glutamate 313.

The protein belongs to the IspG family. [4Fe-4S] cluster serves as cofactor.

It carries out the reaction (2E)-4-hydroxy-3-methylbut-2-enyl diphosphate + oxidized [flavodoxin] + H2O + 2 H(+) = 2-C-methyl-D-erythritol 2,4-cyclic diphosphate + reduced [flavodoxin]. It functions in the pathway isoprenoid biosynthesis; isopentenyl diphosphate biosynthesis via DXP pathway; isopentenyl diphosphate from 1-deoxy-D-xylulose 5-phosphate: step 5/6. In terms of biological role, converts 2C-methyl-D-erythritol 2,4-cyclodiphosphate (ME-2,4cPP) into 1-hydroxy-2-methyl-2-(E)-butenyl 4-diphosphate. This is 4-hydroxy-3-methylbut-2-en-1-yl diphosphate synthase (flavodoxin) from Actinobacillus succinogenes (strain ATCC 55618 / DSM 22257 / CCUG 43843 / 130Z).